Here is a 69-residue protein sequence, read N- to C-terminus: Protein hunchback (69 aa).

3 consecutive C2H2-type zinc fingers follow at residues 1-11, 17-39, and 45-69; these read KHHLEYHLRNH, FKCEKCSYSCVNKSMLNSHLKSH, and YRCANCTYATKYCHSLKLHLRKYSH.

The protein belongs to the hunchback C2H2-type zinc-finger protein family.

It localises to the nucleus. Functionally, gap class segmentation protein that controls development of head structures. The polypeptide is Protein hunchback (hb) (Apis mellifera (Honeybee)).